Reading from the N-terminus, the 137-residue chain is Endoribonuclease YbeY (137 aa).

Zn(2+) contacts are provided by His103, His107, and His113.

The protein belongs to the endoribonuclease YbeY family. Requires Zn(2+) as cofactor.

Its subcellular location is the cytoplasm. Single strand-specific metallo-endoribonuclease involved in late-stage 70S ribosome quality control and in maturation of the 3' terminus of the 16S rRNA. This chain is Endoribonuclease YbeY, found in Acholeplasma laidlawii (strain PG-8A).